The sequence spans 205 residues: Urease accessory protein UreE (205 aa).

The interval 171 to 205 (AHEAHPHAHSHAGGHGHVHSGHGHGGKHGEHDAES) is disordered. The segment covering 177-196 (HAHSHAGGHGHVHSGHGHGG) has biased composition (basic residues).

The protein belongs to the UreE family.

It localises to the cytoplasm. Involved in urease metallocenter assembly. Binds nickel. Probably functions as a nickel donor during metallocenter assembly. This Bordetella bronchiseptica (strain ATCC BAA-588 / NCTC 13252 / RB50) (Alcaligenes bronchisepticus) protein is Urease accessory protein UreE.